The sequence spans 728 residues: Catalase-peroxidase (728 aa).

A cross-link (tryptophyl-tyrosyl-methioninium (Trp-Tyr) (with M-244)) is located at residues 91-218 (WHSAGTYRTA…LAAVQMGLIY (128 aa)). The Proton acceptor role is filled by H92. A cross-link (tryptophyl-tyrosyl-methioninium (Tyr-Met) (with W-91)) is located at residues 218-244 (YVNPEGPDGTPDPVAAAHDIRETFARM). H259 is a binding site for heme b.

Belongs to the peroxidase family. Peroxidase/catalase subfamily. As to quaternary structure, homodimer or homotetramer. Heme b serves as cofactor. In terms of processing, formation of the three residue Trp-Tyr-Met cross-link is important for the catalase, but not the peroxidase activity of the enzyme.

It carries out the reaction H2O2 + AH2 = A + 2 H2O. The enzyme catalyses 2 H2O2 = O2 + 2 H2O. Bifunctional enzyme with both catalase and broad-spectrum peroxidase activity. This Burkholderia lata (strain ATCC 17760 / DSM 23089 / LMG 22485 / NCIMB 9086 / R18194 / 383) protein is Catalase-peroxidase.